A 246-amino-acid polypeptide reads, in one-letter code: 1-(5-phosphoribosyl)-5-[(5-phosphoribosylamino)methylideneamino] imidazole-4-carboxamide isomerase (246 aa).

Asp-10 (proton acceptor) is an active-site residue. The active-site Proton donor is Asp-135.

Belongs to the HisA/HisF family.

It is found in the cytoplasm. The enzyme catalyses 1-(5-phospho-beta-D-ribosyl)-5-[(5-phospho-beta-D-ribosylamino)methylideneamino]imidazole-4-carboxamide = 5-[(5-phospho-1-deoxy-D-ribulos-1-ylimino)methylamino]-1-(5-phospho-beta-D-ribosyl)imidazole-4-carboxamide. It functions in the pathway amino-acid biosynthesis; L-histidine biosynthesis; L-histidine from 5-phospho-alpha-D-ribose 1-diphosphate: step 4/9. The chain is 1-(5-phosphoribosyl)-5-[(5-phosphoribosylamino)methylideneamino] imidazole-4-carboxamide isomerase from Methanococcoides burtonii (strain DSM 6242 / NBRC 107633 / OCM 468 / ACE-M).